The primary structure comprises 118 residues: UPF0102 protein Dtur_1530 (118 aa).

This sequence belongs to the UPF0102 family.

This chain is UPF0102 protein Dtur_1530, found in Dictyoglomus turgidum (strain DSM 6724 / Z-1310).